Here is a 158-residue protein sequence, read N- to C-terminus: NAD(P)H-quinone oxidoreductase subunit N (158 aa).

This sequence belongs to the complex I NdhN subunit family. As to quaternary structure, NDH-1 can be composed of about 15 different subunits; different subcomplexes with different compositions have been identified which probably have different functions.

The protein resides in the cellular thylakoid membrane. The catalysed reaction is a plastoquinone + NADH + (n+1) H(+)(in) = a plastoquinol + NAD(+) + n H(+)(out). It catalyses the reaction a plastoquinone + NADPH + (n+1) H(+)(in) = a plastoquinol + NADP(+) + n H(+)(out). In terms of biological role, NDH-1 shuttles electrons from an unknown electron donor, via FMN and iron-sulfur (Fe-S) centers, to quinones in the respiratory and/or the photosynthetic chain. The immediate electron acceptor for the enzyme in this species is believed to be plastoquinone. Couples the redox reaction to proton translocation, and thus conserves the redox energy in a proton gradient. Cyanobacterial NDH-1 also plays a role in inorganic carbon-concentration. The polypeptide is NAD(P)H-quinone oxidoreductase subunit N (Synechococcus elongatus (strain ATCC 33912 / PCC 7942 / FACHB-805) (Anacystis nidulans R2)).